Here is a 179-residue protein sequence, read N- to C-terminus: TPD1 protein homolog 1 (179 aa).

Positions 1 to 30 (MRMEHIYKFQHWLFFIGLGVLLSLSLSVKA) are cleaved as a signal peptide.

The sequence is that of TPD1 protein homolog 1 from Arabidopsis thaliana (Mouse-ear cress).